Reading from the N-terminus, the 131-residue chain is Small ribosomal subunit protein uS8 (131 aa).

The disordered stretch occupies residues M1–M27.

It belongs to the universal ribosomal protein uS8 family. In terms of assembly, part of the 30S ribosomal subunit. Contacts proteins S5 and S12.

Functionally, one of the primary rRNA binding proteins, it binds directly to 16S rRNA central domain where it helps coordinate assembly of the platform of the 30S subunit. The protein is Small ribosomal subunit protein uS8 of Thioalkalivibrio sulfidiphilus (strain HL-EbGR7).